The primary structure comprises 152 residues: Xanthine-guanine phosphoribosyltransferase (152 aa).

5-phospho-alpha-D-ribose 1-diphosphate-binding positions include 37-38, Arg-69, and 88-96; these read RG and DDLVDTGGT. Arg-69 provides a ligand contact to GMP. Asp-89 serves as a coordination point for Mg(2+). 2 residues coordinate guanine: Asp-92 and Ile-135. 2 residues coordinate xanthine: Asp-92 and Ile-135. GMP is bound by residues 92 to 96 and 134 to 135; these read DTGGT and WI.

It belongs to the purine/pyrimidine phosphoribosyltransferase family. XGPT subfamily. Homotetramer. Mg(2+) is required as a cofactor.

It localises to the cell inner membrane. The enzyme catalyses GMP + diphosphate = guanine + 5-phospho-alpha-D-ribose 1-diphosphate. It carries out the reaction XMP + diphosphate = xanthine + 5-phospho-alpha-D-ribose 1-diphosphate. The catalysed reaction is IMP + diphosphate = hypoxanthine + 5-phospho-alpha-D-ribose 1-diphosphate. Its pathway is purine metabolism; GMP biosynthesis via salvage pathway; GMP from guanine: step 1/1. It functions in the pathway purine metabolism; XMP biosynthesis via salvage pathway; XMP from xanthine: step 1/1. In terms of biological role, purine salvage pathway enzyme that catalyzes the transfer of the ribosyl-5-phosphate group from 5-phospho-alpha-D-ribose 1-diphosphate (PRPP) to the N9 position of the 6-oxopurines guanine and xanthine to form the corresponding ribonucleotides GMP (guanosine 5'-monophosphate) and XMP (xanthosine 5'-monophosphate), with the release of PPi. To a lesser extent, also acts on hypoxanthine. The chain is Xanthine-guanine phosphoribosyltransferase from Enterobacter sp. (strain 638).